The sequence spans 606 residues: MCGIIGIVGKEPVADRLIESLKRLEYRGYDSAGVAGVVGGKVERRRAQGKIKALEAVLADEPLTATTGIGHTRWATHGAPNVRNAHPHTAGRVTLVHNGIIENFAELKAELAGMGRTFESDTDTEVIAQLIDVALAKGLAPLDAFKATLDRLTGAYALAVLIQGEADLLLGARRGSPLVVGEGQGEMFLGSDALAVGPFTNRVIYLEEGDYVALDHDSRRIFDASGARVERPVRVVPTSSVMLEKGNYRHFMEKEIHDQPEGCQRTIAAYVDTLTSKAAVPGDIDFATLDRIQIVACGTSYIAGVIGKYLIEQLADLPVDVEIASEFRYRTPALRPGSLVVAMSQSGETADTLAALRYCKAKGMKSAVVVNAQESTMAREVDVVWPIHCGPEIGVASTKAFTAQVSVMIALAIAAAKARGTIDAAEEQRLVKVLLEAPRLIAEAIGLEDAIKEIAADVAKARDVLYLGRGPMSALALEGALKLKEISYIHAEGYAAGELKHGPIALVDDQTPIVILAPYDSYFEKSASNMSEVMARGGQVIFITDTEGVKHAPAGAKVVVTAPASDPLVSTLVMSAPIQLLAYHVAVVKGADVDQPRNLAKSVTVE.

Cys2 acts as the Nucleophile; for GATase activity in catalysis. The Glutamine amidotransferase type-2 domain maps to 2–217 (CGIIGIVGKE…EGDYVALDHD (216 aa)). SIS domains follow at residues 280–421 (VPGD…ARGT) and 454–596 (IAAD…VDQP). The active-site For Fru-6P isomerization activity is the Lys601.

As to quaternary structure, homodimer.

It is found in the cytoplasm. The catalysed reaction is D-fructose 6-phosphate + L-glutamine = D-glucosamine 6-phosphate + L-glutamate. Catalyzes the first step in hexosamine metabolism, converting fructose-6P into glucosamine-6P using glutamine as a nitrogen source. The polypeptide is Glutamine--fructose-6-phosphate aminotransferase [isomerizing] (Caulobacter vibrioides (strain ATCC 19089 / CIP 103742 / CB 15) (Caulobacter crescentus)).